Here is a 715-residue protein sequence, read N- to C-terminus: Polyribonucleotide nucleotidyltransferase (715 aa).

Mg(2+) is bound by residues Asp491 and Asp497. In terms of domain architecture, KH spans 558 to 617 (PKIMTMTINPEKIRDVIGPQGRVINKIIEETGVKIDIEQDGRVFIASINHEANLRAKQII). An S1 motif domain is found at 627–695 (GQVYLGTVKR…DQGRVNLSRK (69 aa)).

This sequence belongs to the polyribonucleotide nucleotidyltransferase family. It depends on Mg(2+) as a cofactor.

It is found in the cytoplasm. It carries out the reaction RNA(n+1) + phosphate = RNA(n) + a ribonucleoside 5'-diphosphate. In terms of biological role, involved in mRNA degradation. Catalyzes the phosphorolysis of single-stranded polyribonucleotides processively in the 3'- to 5'-direction. The sequence is that of Polyribonucleotide nucleotidyltransferase from Brevibacillus brevis (strain 47 / JCM 6285 / NBRC 100599).